The sequence spans 84 residues: Defensin-like protein 140 (84 aa).

Positions methionine 1–glycine 28 are cleaved as a signal peptide. Disulfide bonds link cysteine 37–cysteine 81, cysteine 46–cysteine 65, cysteine 51–cysteine 75, and cysteine 55–cysteine 77.

It belongs to the DEFL family.

The protein resides in the secreted. This is Defensin-like protein 140 (LCR15) from Arabidopsis thaliana (Mouse-ear cress).